Consider the following 281-residue polypeptide: Cytochrome c oxidase subunit 3 (281 aa).

The Mitochondrial matrix segment spans residues 1–15 (MTHQTHAYHMVNPSP). The helical transmembrane segment at 16–34 (WPLTGALSALLLTSGLIMW) threads the bilayer. Over 35–40 (FHYNSS) the chain is Mitochondrial intermembrane. The chain crosses the membrane as a helical span at residues 41-66 (TLMFMGLTTMLLTMYQWWRDIIREGT). Residues 67-72 (FQGHHT) lie on the Mitochondrial matrix side of the membrane. The chain crosses the membrane as a helical span at residues 73–105 (PVVQKGLRYGMILFILSEVFFFIGFFWAFYHSS). At 106–128 (LAPTPELGGCWPPTGIHPLNPLE) the chain is on the mitochondrial intermembrane side. A helical membrane pass occupies residues 129–152 (VPLLNTSILLASGVSITWAHHSLM). Topologically, residues 153–155 (EGN) are mitochondrial matrix. Residues 156–183 (RKQMIQALLITISLGLYFTILQAMEYYE) traverse the membrane as a helical segment. The Mitochondrial intermembrane portion of the chain corresponds to 184–190 (ASFTISD). Residues 191–223 (GVYGSTFFVATGFHGLHVIIGSTFLIVCLLRQL) form a helical membrane-spanning segment. The Mitochondrial matrix portion of the chain corresponds to 224–232 (FYHFTSTHH). A helical transmembrane segment spans residues 233–256 (FGFEAAAWYWHFVDVVWLFLYVSI). Over 257–281 (YWWGSYFSSMISTTDFQSLSSGSNQ) the chain is Mitochondrial intermembrane.

Belongs to the cytochrome c oxidase subunit 3 family. In terms of assembly, component of the cytochrome c oxidase (complex IV, CIV), a multisubunit enzyme composed of 14 subunits. The complex is composed of a catalytic core of 3 subunits MT-CO1, MT-CO2 and MT-CO3, encoded in the mitochondrial DNA, and 11 supernumerary subunits COX4I, COX5A, COX5B, COX6A, COX6B, COX6C, COX7A, COX7B, COX7C, COX8 and NDUFA4, which are encoded in the nuclear genome. The complex exists as a monomer or a dimer and forms supercomplexes (SCs) in the inner mitochondrial membrane with NADH-ubiquinone oxidoreductase (complex I, CI) and ubiquinol-cytochrome c oxidoreductase (cytochrome b-c1 complex, complex III, CIII), resulting in different assemblies (supercomplex SCI(1)III(2)IV(1) and megacomplex MCI(2)III(2)IV(2)).

The protein resides in the mitochondrion inner membrane. The catalysed reaction is 4 Fe(II)-[cytochrome c] + O2 + 8 H(+)(in) = 4 Fe(III)-[cytochrome c] + 2 H2O + 4 H(+)(out). Functionally, component of the cytochrome c oxidase, the last enzyme in the mitochondrial electron transport chain which drives oxidative phosphorylation. The respiratory chain contains 3 multisubunit complexes succinate dehydrogenase (complex II, CII), ubiquinol-cytochrome c oxidoreductase (cytochrome b-c1 complex, complex III, CIII) and cytochrome c oxidase (complex IV, CIV), that cooperate to transfer electrons derived from NADH and succinate to molecular oxygen, creating an electrochemical gradient over the inner membrane that drives transmembrane transport and the ATP synthase. Cytochrome c oxidase is the component of the respiratory chain that catalyzes the reduction of oxygen to water. Electrons originating from reduced cytochrome c in the intermembrane space (IMS) are transferred via the dinuclear copper A center (CU(A)) of subunit 2 and heme A of subunit 1 to the active site in subunit 1, a binuclear center (BNC) formed by heme A3 and copper B (CU(B)). The BNC reduces molecular oxygen to 2 water molecules using 4 electrons from cytochrome c in the IMS and 4 protons from the mitochondrial matrix. The protein is Cytochrome c oxidase subunit 3 (MT-CO3) of Didelphis virginiana (North American opossum).